Here is a 152-residue protein sequence, read N- to C-terminus: Protein SprT-like (152 aa).

The SprT-like domain maps to 6–151 (LQQLVCRISL…SKCLGKLELL (146 aa)). A Zn(2+)-binding site is contributed by His67. The active site involves Glu68. Residue His71 participates in Zn(2+) binding.

It belongs to the SprT family. The cofactor is Zn(2+).

Its subcellular location is the cytoplasm. The protein is Protein SprT-like of Lysinibacillus sphaericus (strain C3-41).